We begin with the raw amino-acid sequence, 1002 residues long: Solute carrier family 12 member 3 (1002 aa).

Over 1 to 135 (MAELPVTELP…KSPGEPVRFG (135 aa)) the chain is Cytoplasmic. Ser-41 carries the phosphoserine modification. Thr-44 is subject to Phosphothreonine. Phosphoserine is present on Ser-47. Phosphothreonine is present on residues Thr-48, Thr-53, and Thr-58. Ser-71 and Ser-89 each carry phosphoserine. Phosphothreonine is present on Thr-122. The residue at position 124 (Ser-124) is a Phosphoserine. The chain crosses the membrane as a discontinuously helical span at residues 136-165 (WVKGVMIRCMLNIWGVILYLRLPWITAQAG). Na(+)-binding residues include Leu-146 and Trp-149. The helical transmembrane segment at 166–187 (IVLTWLIILLSVMVTSITGLSI) threads the bilayer. Over 188-218 (SAISTNGKVKSGGTYFLISRSLGPELGGSIG) the chain is Cytoplasmic. A helical transmembrane segment spans residues 219–241 (LIFAFANAVGVAMHTVGFAETVR). Over 242 to 253 (DLLQEYGTPIVD) the chain is Extracellular. A run of 2 helical transmembrane segments spans residues 254–278 (PIND…AGME) and 279–301 (WESK…YLVG). Residues 302–336 (TLIPASEDKASKGFYSYHGDIFVQNLVPDWRGIDG) are Extracellular-facing. Residues 337 to 358 (SFFGMFSIFFPSATGILAGANI) traverse the membrane as a discontinuously helical segment. The chloride site is built by Gly-351, Ile-352, and Leu-353. The Cytoplasmic portion of the chain corresponds to 359–369 (SGDLKDPAVAI). A helical transmembrane segment spans residues 370-391 (PKGTLMAIFWTTISYLAISATI). At 392 to 451 (GSCVVRDASGDVNDTMTPGPGPCEGLACGYGWNFTECSQQRSCRYGLINYYQTMSMVSAF) the chain is on the extracellular side. The N-linked (GlcNAc...) asparagine glycan is linked to Asn-404. Cysteines 414 and 419 form a disulfide. A glycan (N-linked (GlcNAc...) asparagine) is linked at Asn-424. Cys-428 and Cys-434 are oxidised to a cystine. A helical transmembrane segment spans residues 452-475 (APLITAGIFGATLSSALACLVSAA). Na(+)-binding residues include Ala-462, Ser-465, and Ser-466. Residues 476-505 (KVFQCLCEDQLYPLIGFFGKGYGKNREPVR) are Cytoplasmic-facing. A helical membrane pass occupies residues 506–520 (GYLLAYAIAVAFIII). Over 521 to 525 (AELNT) the chain is Extracellular. Residues 526-542 (IAPIISNFFLCSYALIN) form a helical membrane-spanning segment. Tyr-538 serves as a coordination point for chloride. The Cytoplasmic segment spans residues 543 to 565 (FSCFHASITNSPGWRPSFRYYSK). Transmembrane regions (helical) follow at residues 566–585 (WAAL…LTWW) and 586–597 (AALIAIGVVLFL). Residues 598-1002 (LLYVIYKKPE…QENVLTFYCQ (405 aa)) are Cytoplasmic-facing. A scissor helix region spans residues 613-628 (SVQAGSYNLALSYSVG). 6 residues coordinate ATP: Leu-646, Arg-653, Val-675, Gly-739, Leu-778, and Asn-779.

It belongs to the SLC12A transporter family. As to quaternary structure, homodimer; adopts a domain-swap conformation at the scissor helices connecting the transmembrane domain and C-terminal domain. Interacts with KLHL3. Interacts with IL18R1; this interaction is increased by IL18 treatment. Ubiquitinated; ubiquitination is essential for regulation of endocytosis. Post-translationally, phosphorylated at Thr-53, Thr-58 and Ser-71 by OXSR1/OSR1 and STK39/SPAK downstream of WNK4, promoting its activity. Phosphorylated in response to IL18. As to expression, expressed predominantly in kidney, including in distal tubules (at protein level). Detected at low levels in heart, lung and liver. Not detected in normal aorta, but abundantly expressed in fatty streaks and advanced atherosclerotic lesions. In atherosclerotic lesions, expressed in macrophages, smooth muscle cells and endothelial cells (at protein level).

It localises to the cell membrane. The protein resides in the apical cell membrane. The catalysed reaction is chloride(out) + Na(+)(out) = chloride(in) + Na(+)(in). Phosphorylation by OXSR1/OSR1 and STK39/SPAK in kidney distal convoluted tubules promotes its activity. Also activated by OXSR1/OSR1 and STK39/SPAK downstream of WNK3. Inhibited by thiazide-type diuretic metolazone. Thiazide drugs, such as polythiazide, specifically inhibit SLC12A3/NCC transporter activity by competing with chloride for binding. Its function is as follows. Electroneutral sodium and chloride ion cotransporter, which acts as a key mediator of sodium and chloride reabsorption in kidney distal convoluted tubules. Also acts as a receptor for the pro-inflammatory cytokine IL18, thereby contributing to IL18-induced cytokine production, including IFNG, IL6, IL18 and CCL2. May act either independently of IL18R1, or in a complex with IL18R1. The sequence is that of Solute carrier family 12 member 3 from Mus musculus (Mouse).